The sequence spans 304 residues: UDP-3-O-acyl-N-acetylglucosamine deacetylase (304 aa).

Positions 78, 237, and 241 each coordinate Zn(2+). The active-site Proton donor is His264.

It belongs to the LpxC family. Zn(2+) serves as cofactor.

The catalysed reaction is a UDP-3-O-[(3R)-3-hydroxyacyl]-N-acetyl-alpha-D-glucosamine + H2O = a UDP-3-O-[(3R)-3-hydroxyacyl]-alpha-D-glucosamine + acetate. It participates in glycolipid biosynthesis; lipid IV(A) biosynthesis; lipid IV(A) from (3R)-3-hydroxytetradecanoyl-[acyl-carrier-protein] and UDP-N-acetyl-alpha-D-glucosamine: step 2/6. Catalyzes the hydrolysis of UDP-3-O-myristoyl-N-acetylglucosamine to form UDP-3-O-myristoylglucosamine and acetate, the committed step in lipid A biosynthesis. In Marinobacter nauticus (strain ATCC 700491 / DSM 11845 / VT8) (Marinobacter aquaeolei), this protein is UDP-3-O-acyl-N-acetylglucosamine deacetylase.